Consider the following 47-residue polypeptide: VACRCESDGPDVRSATFTGTVDLWNCNTGWHKCIATYTAVASCCKKD.

3 cysteine pairs are disulfide-bonded: cysteine 3–cysteine 43, cysteine 5–cysteine 33, and cysteine 26–cysteine 44.

The protein belongs to the sea anemone sodium channel inhibitory toxin family. Type II subfamily.

Its subcellular location is the secreted. It is found in the nematocyst. Functionally, is potently lethal to crabs, although it showed neither lethal activity in mice nor hemolytic activity. May bind to voltage-gated sodium channels (Nav), thereby delaying their inactivation during signal transduction. The sequence is that of Delta-halcutoxin-Hcg1a from Isohalcurias carlgreni (Sea anemone).